Here is a 339-residue protein sequence, read N- to C-terminus: Silicatein (339 aa).

Positions 1 to 18 (MAIVYGAILFQIILIACA) are cleaved as a signal peptide. A propeptide spanning residues 19–122 (EFPPEWHAWK…REYQAPATVS (104 aa)) is cleaved from the precursor. N,N-dimethylleucine; alternate is present on Leu-123. Leu-123 is modified (N-methylleucine; alternate). Ser-188 bears the Phosphoserine mark. Tyr-219 carries the post-translational modification Phosphotyrosine. Residues His-286 and Asn-306 contribute to the active site. Residue Ser-335 is modified to Phosphoserine.

The protein belongs to the peptidase C1 family. In terms of assembly, homodimer. Homodimerization occurs as a result of non-covalent interactions and not through disulfide linkages between the two monomers.

In terms of biological role, polymerizes silica around the axial filament during spicule formation. In Petrosia ficiformis (Common Mediterranean sponge), this protein is Silicatein.